The chain runs to 209 residues: Pyroglutamyl-peptidase 1 (209 aa).

Residues glutamate 85, cysteine 149, and histidine 168 contribute to the active site.

It belongs to the peptidase C15 family. As to quaternary structure, monomer.

The protein resides in the cytoplasm. It catalyses the reaction Release of an N-terminal pyroglutamyl group from a polypeptide, the second amino acid generally not being Pro.. Functionally, removes 5-oxoproline from various penultimate amino acid residues except L-proline. This Rattus norvegicus (Rat) protein is Pyroglutamyl-peptidase 1 (Pgpep1).